Here is a 218-residue protein sequence, read N- to C-terminus: Pyridoxine/pyridoxamine 5'-phosphate oxidase (218 aa).

Residues 14–17 (RREY) and Lys72 each bind substrate. FMN contacts are provided by residues 67 to 72 (RIVLLK), 82 to 83 (YT), Arg88, Lys89, and Gln111. Substrate is bound by residues Tyr129, Arg133, and Ser137. FMN-binding positions include 146–147 (QS) and Trp191. 197-199 (RLH) contacts substrate. FMN is bound at residue Arg201.

This sequence belongs to the pyridoxamine 5'-phosphate oxidase family. Homodimer. It depends on FMN as a cofactor.

It carries out the reaction pyridoxamine 5'-phosphate + O2 + H2O = pyridoxal 5'-phosphate + H2O2 + NH4(+). It catalyses the reaction pyridoxine 5'-phosphate + O2 = pyridoxal 5'-phosphate + H2O2. Its pathway is cofactor metabolism; pyridoxal 5'-phosphate salvage; pyridoxal 5'-phosphate from pyridoxamine 5'-phosphate: step 1/1. It functions in the pathway cofactor metabolism; pyridoxal 5'-phosphate salvage; pyridoxal 5'-phosphate from pyridoxine 5'-phosphate: step 1/1. In terms of biological role, catalyzes the oxidation of either pyridoxine 5'-phosphate (PNP) or pyridoxamine 5'-phosphate (PMP) into pyridoxal 5'-phosphate (PLP). This chain is Pyridoxine/pyridoxamine 5'-phosphate oxidase, found in Escherichia coli (strain 55989 / EAEC).